The sequence spans 343 residues: Ribosomal RNA small subunit methyltransferase C (343 aa).

This sequence belongs to the methyltransferase superfamily. RsmC family. Monomer.

The protein localises to the cytoplasm. The catalysed reaction is guanosine(1207) in 16S rRNA + S-adenosyl-L-methionine = N(2)-methylguanosine(1207) in 16S rRNA + S-adenosyl-L-homocysteine + H(+). Functionally, specifically methylates the guanine in position 1207 of 16S rRNA in the 30S particle. This Escherichia coli (strain ATCC 8739 / DSM 1576 / NBRC 3972 / NCIMB 8545 / WDCM 00012 / Crooks) protein is Ribosomal RNA small subunit methyltransferase C.